A 547-amino-acid chain; its full sequence is Probable high-affinity hexose transporter ght8, mitochondrial (547 aa).

Residues M1–G21 constitute a mitochondrion transit peptide. Topologically, residues A22–R86 are mitochondrial intermembrane. The helical transmembrane segment at V87 to V107 threads the bilayer. The Cytoplasmic portion of the chain corresponds to P108–Q112. The helical transmembrane segment at I113 to G133 threads the bilayer. The Mitochondrial intermembrane segment spans residues F134–R144. A helical membrane pass occupies residues G145–I165. At N166–R179 the chain is on the cytoplasmic side. Residues V180–P200 traverse the membrane as a helical segment. Residues E201–A304 lie on the Mitochondrial intermembrane side of the membrane. The chain crosses the membrane as a helical span at residues L305–F325. At G326 to R328 the chain is on the cytoplasmic side. Residues M329–G349 form a helical membrane-spanning segment. Over N350–R363 the chain is Mitochondrial intermembrane. A helical transmembrane segment spans residues A364–G384. The Cytoplasmic segment spans residues P385–A404. Residues A405–I425 traverse the membrane as a helical segment. The Mitochondrial intermembrane segment spans residues S426–K432. A helical transmembrane segment spans residues Y433 to H453. Topologically, residues E454–A547 are cytoplasmic. A disordered region spans residues G482–A547. Over residues T517–S529 the composition is skewed to low complexity. S519 carries the phosphoserine modification. T523 and T526 each carry phosphothreonine. Phosphoserine occurs at positions 527, 528, 529, and 537.

The protein belongs to the major facilitator superfamily. Sugar transporter (TC 2.A.1.1) family.

Its subcellular location is the mitochondrion membrane. In Schizosaccharomyces pombe (strain 972 / ATCC 24843) (Fission yeast), this protein is Probable high-affinity hexose transporter ght8, mitochondrial (ght8).